The following is a 325-amino-acid chain: NADH-quinone oxidoreductase subunit H (325 aa).

8 helical membrane passes run 11-31, 81-101, 114-134, 149-169, 186-206, 237-257, 265-285, and 304-324; these read VLIA…CGAL, MIFT…FAIV, IGIL…LFAG, ASAQ…GVVA, MWNV…GVAV, FFVG…TMFF, LPPF…FILI, and ICLP…LYNA.

This sequence belongs to the complex I subunit 1 family. NDH-1 is composed of 13 different subunits. Subunits NuoA, H, J, K, L, M, N constitute the membrane sector of the complex.

The protein localises to the cell inner membrane. It carries out the reaction a quinone + NADH + 5 H(+)(in) = a quinol + NAD(+) + 4 H(+)(out). Its function is as follows. NDH-1 shuttles electrons from NADH, via FMN and iron-sulfur (Fe-S) centers, to quinones in the respiratory chain. The immediate electron acceptor for the enzyme in this species is believed to be ubiquinone. Couples the redox reaction to proton translocation (for every two electrons transferred, four hydrogen ions are translocated across the cytoplasmic membrane), and thus conserves the redox energy in a proton gradient. This subunit may bind ubiquinone. This chain is NADH-quinone oxidoreductase subunit H, found in Photorhabdus laumondii subsp. laumondii (strain DSM 15139 / CIP 105565 / TT01) (Photorhabdus luminescens subsp. laumondii).